The primary structure comprises 174 residues: UPF0113 protein AF_0058 (174 aa).

Residues 87–161 (RNRVWVNERG…KVFVENLVDR (75 aa)) form the PUA domain.

The protein belongs to the UPF0113 family.

The chain is UPF0113 protein AF_0058 from Archaeoglobus fulgidus (strain ATCC 49558 / DSM 4304 / JCM 9628 / NBRC 100126 / VC-16).